We begin with the raw amino-acid sequence, 293 residues long: N-acetylmannosamine kinase (293 aa).

Residues 5 to 12 and 133 to 140 contribute to the ATP site; these read AIDIGGTK and GVGGGLVI. Positions 157, 167, 169, and 174 each coordinate Zn(2+).

It belongs to the ROK (NagC/XylR) family. NanK subfamily. In terms of assembly, homodimer.

It carries out the reaction an N-acyl-D-mannosamine + ATP = an N-acyl-D-mannosamine 6-phosphate + ADP + H(+). It participates in amino-sugar metabolism; N-acetylneuraminate degradation; D-fructose 6-phosphate from N-acetylneuraminate: step 2/5. Catalyzes the phosphorylation of N-acetylmannosamine (ManNAc) to ManNAc-6-P. The sequence is that of N-acetylmannosamine kinase from Vibrio vulnificus (strain CMCP6).